The following is a 273-amino-acid chain: Tryptase-2 (273 aa).

Residues 1–18 form the signal peptide; it reads MLHLLALALLLSLVSAAP. Residues 19 to 28 constitute a propeptide, activation peptide; the sequence is APGQALQRSG. A Peptidase S1 domain is found at 29 to 270; sequence IIGGKEAPGS…YLDWIHQYVP (242 aa). C57 and C73 are joined by a disulfide. Residues H72 and D119 each act as charge relay system in the active site. 3 disulfide bridges follow: C153–C228, C186–C209, and C218–C246. The active-site Charge relay system is the S222. An N-linked (GlcNAc...) asparagine glycan is attached at N231.

Belongs to the peptidase S1 family. Tryptase subfamily. As to quaternary structure, homotetramer.

Its subcellular location is the secreted. The enzyme catalyses Preferential cleavage: Arg-|-Xaa, Lys-|-Xaa, but with more restricted specificity than trypsin.. Its function is as follows. Tryptase is the major neutral protease present in mast cells and is secreted upon the coupled activation-degranulation response of this cell type. In Ovis aries (Sheep), this protein is Tryptase-2.